The following is a 487-amino-acid chain: uncharacterized protein (487 aa).

2 ABC transporter domains span residues 5–249 and 265–487; these read VKFA…IPVK and ISME…VIHA. Residue 297–304 participates in ATP binding; it reads GSNGSGKT.

Belongs to the ABC transporter superfamily.

The protein localises to the mitochondrion. This is an uncharacterized protein from Schizosaccharomyces pombe (strain 972 / ATCC 24843) (Fission yeast).